Here is a 148-residue protein sequence, read N- to C-terminus: Putative pre-16S rRNA nuclease (148 aa).

Belongs to the YqgF nuclease family.

The protein resides in the cytoplasm. Its function is as follows. Could be a nuclease involved in processing of the 5'-end of pre-16S rRNA. The chain is Putative pre-16S rRNA nuclease from Chlamydia trachomatis serovar A (strain ATCC VR-571B / DSM 19440 / HAR-13).